Consider the following 213-residue polypeptide: ATP phosphoribosyltransferase (213 aa).

The protein belongs to the ATP phosphoribosyltransferase family. Short subfamily. As to quaternary structure, heteromultimer composed of HisG and HisZ subunits.

It localises to the cytoplasm. It catalyses the reaction 1-(5-phospho-beta-D-ribosyl)-ATP + diphosphate = 5-phospho-alpha-D-ribose 1-diphosphate + ATP. It functions in the pathway amino-acid biosynthesis; L-histidine biosynthesis; L-histidine from 5-phospho-alpha-D-ribose 1-diphosphate: step 1/9. Its function is as follows. Catalyzes the condensation of ATP and 5-phosphoribose 1-diphosphate to form N'-(5'-phosphoribosyl)-ATP (PR-ATP). Has a crucial role in the pathway because the rate of histidine biosynthesis seems to be controlled primarily by regulation of HisG enzymatic activity. The protein is ATP phosphoribosyltransferase of Variovorax paradoxus (strain S110).